Reading from the N-terminus, the 209-residue chain is Glutathione S-transferase 2 (209 aa).

The 81-residue stretch at 1 to 81 folds into the GST N-terminal domain; the sequence is MLDFYYLPGS…YLCDQYGDED (81 aa). Glutathione is bound by residues S10, 51–53, and 65–67; these read RTI and ESR. The GST C-terminal domain maps to 88–209; the sequence is DTIQRAIVNQ…SGAKEFLTYK (122 aa).

Belongs to the GST superfamily. Theta family. As to quaternary structure, homodimer.

It carries out the reaction RX + glutathione = an S-substituted glutathione + a halide anion + H(+). Functionally, conjugation of reduced glutathione to a wide number of exogenous and endogenous hydrophobic electrophiles. This is Glutathione S-transferase 2 (GstD2) from Anopheles gambiae (African malaria mosquito).